Here is a 396-residue protein sequence, read N- to C-terminus: Putative carbamoyltransferase YgeW (396 aa).

Carbamoyl phosphate contacts are provided by residues 71–74 (STRT), glutamine 98, 165–168 (HPTQ), and 330–331 (CL).

It belongs to the aspartate/ornithine carbamoyltransferase superfamily. As to quaternary structure, homotrimer.

The chain is Putative carbamoyltransferase YgeW (ygeW) from Escherichia coli O157:H7.